The sequence spans 475 residues: Sulfate adenylyltransferase subunit 1 (475 aa).

One can recognise a tr-type G domain in the interval 25–239 (KSLLRFLTCG…EVLETVEIQR (215 aa)). The tract at residues 34 to 41 (GSVDDGKS) is G1. A GTP-binding site is contributed by 34 to 41 (GSVDDGKS). The tract at residues 92–96 (GITID) is G2. The G3 stretch occupies residues 113-116 (DTPG). Residues 113 to 117 (DTPGH) and 168 to 171 (NKMD) contribute to the GTP site. Residues 168–171 (NKMD) are G4. Positions 206-208 (SAL) are G5.

This sequence belongs to the TRAFAC class translation factor GTPase superfamily. Classic translation factor GTPase family. CysN/NodQ subfamily. In terms of assembly, heterodimer composed of CysD, the smaller subunit, and CysN.

It carries out the reaction sulfate + ATP + H(+) = adenosine 5'-phosphosulfate + diphosphate. Its pathway is sulfur metabolism; hydrogen sulfide biosynthesis; sulfite from sulfate: step 1/3. With CysD forms the ATP sulfurylase (ATPS) that catalyzes the adenylation of sulfate producing adenosine 5'-phosphosulfate (APS) and diphosphate, the first enzymatic step in sulfur assimilation pathway. APS synthesis involves the formation of a high-energy phosphoric-sulfuric acid anhydride bond driven by GTP hydrolysis by CysN coupled to ATP hydrolysis by CysD. The chain is Sulfate adenylyltransferase subunit 1 from Escherichia coli O127:H6 (strain E2348/69 / EPEC).